Reading from the N-terminus, the 101-residue chain is MMPTLNDEQRKALFAELPGWSLQNDRDAIHKRFTFTDFNAAFGFMTRVALKAEQVNHHPEWFNVWNRVDITLSTHDANGLTHRDADLARFIEQAAQLTGAK.

Belongs to the pterin-4-alpha-carbinolamine dehydratase family.

It catalyses the reaction (4aS,6R)-4a-hydroxy-L-erythro-5,6,7,8-tetrahydrobiopterin = (6R)-L-erythro-6,7-dihydrobiopterin + H2O. This chain is Putative pterin-4-alpha-carbinolamine dehydratase (phhB), found in Ralstonia nicotianae (strain ATCC BAA-1114 / GMI1000) (Ralstonia solanacearum).